We begin with the raw amino-acid sequence, 485 residues long: Adenylate kinase 8 (485 aa).

2 adenylate kinase regions span residues 58–258 (PRVF…TFVL) and 269–472 (PRIL…YTVS). 67–72 (ASGKHT) contributes to the ATP binding site. Residues 87–113 (TPESVLSSDVSLLAKEAQSYRDKGQEV) are NMP 1. AMP-binding positions include 140 to 143 (GFPK) and Gln-147. The segment at 177–206 (GKRIDTANGEVYHTTFDWPSDPTVQRNLVE) is LID 1. AMP is bound at residue Arg-218. 278–283 (GSGRSL) contributes to the ATP binding site. An NMP 2 region spans residues 298 to 327 (CCGQVLKEAVADQTKLGEVIQPYIENDQQV). Residues 325 to 327 (QQV), 354 to 357 (GFPR), and Gln-361 each bind AMP. The interval 391 to 424 (LCMTDPVSGERYHDIYKPAPSSEVHERLQQNPRH) is LID 2. Arg-432 contacts AMP.

The protein belongs to the adenylate kinase family.

It localises to the cytoplasm. The protein resides in the cytosol. It carries out the reaction AMP + ATP = 2 ADP. The enzyme catalyses a 2'-deoxyribonucleoside 5'-diphosphate + ATP = a 2'-deoxyribonucleoside 5'-triphosphate + ADP. It catalyses the reaction a ribonucleoside 5'-diphosphate + ATP = a ribonucleoside 5'-triphosphate + ADP. Functionally, nucleoside monophosphate (NMP) kinase that catalyzes the reversible transfer of the terminal phosphate group between nucleoside triphosphates and monophosphates. Has highest activity toward AMP, and weaker activity toward dAMP, CMP and dCMP. Also displays broad nucleoside diphosphate kinase activity. The chain is Adenylate kinase 8 (ak8) from Xenopus tropicalis (Western clawed frog).